The following is a 600-amino-acid chain: MSDETVSRSQFSLKTYAVRVFALPVSWYYSLSQIKFSPVAKKLFMVTAVSAVSVIFLAHHFKRRRGKQKGKVLPWEPEHLLLEHTRRAASEKGSSCSSSRQNLTLSLSSTKEKGSQCCNYPNGGLLSRYSGSAQSLGSVQSVNSCHSCACGNSNSWDKADDDDIRLVNIPVTTPENLYLMGMELFEEALRRWEQALTFRSRQAEDEACSSVKLGAGDAIAEESVDDIISSEFIHKLEALLQRAYRLQEEFEATLGGSDPNSIANDTDKDTDMSLRETMDELGLPDAMNMDSADLFASATELAEQREAQQTFSLESFCPCPFYEEAMHLVEEGKIYSRVLRTEMLECLGDSDFLAKLHCIRQAFQLILAEADNRSFLAESGRKILSALIVKARKNPKKFQDVFDEMINFLEQTDHWDSTELELAARGVKNLNFYDVVLDFILMDSFEDLENPPTSIQSVVNNRWLNSSFKESAVASSCWSVLKQKRQQMKISDGFFAHFYAICEHVSPVLAWGFLGPRNSLYDLCCFFKNQVLFFLKDIFDFEKVRYSSIDTLAEDLTHLLIRRTELLVTCLGADALRHATTCTSGHSHAVPTALLEAKVQ.

Transmembrane regions (helical) follow at residues 15-32 and 38-58; these read TYAVRVFALPVSWYYSLS and PVAKKLFMVTAVSAVSVIFLA. Phosphoserine occurs at positions 257 and 261.

It belongs to the mitoguardin family. In terms of assembly, homodimer and heterodimer; forms heterodimers with MIGA2. Interacts with PLD6/MitoPLD.

It is found in the mitochondrion outer membrane. Functionally, regulator of mitochondrial fusion. Acts by forming homo- and heterodimers at the mitochondrial outer membrane and facilitating the formation of PLD6/MitoPLD dimers. May act by regulating phospholipid metabolism via PLD6/MitoPLD. This is Mitoguardin 1 from Mus musculus (Mouse).